Reading from the N-terminus, the 208-residue chain is Protein GrpE (208 aa).

Residues 1–25 show a composition bias toward basic and acidic residues; sequence MVDNKDFNEELKENIQEELDNETKA. The tract at residues 1 to 38 is disordered; that stretch reads MVDNKDFNEELKENIQEELDNETKAENPNIDEEVEEVS. Acidic residues predominate over residues 29-38; the sequence is NIDEEVEEVS.

It belongs to the GrpE family. In terms of assembly, homodimer.

The protein resides in the cytoplasm. In terms of biological role, participates actively in the response to hyperosmotic and heat shock by preventing the aggregation of stress-denatured proteins, in association with DnaK and GrpE. It is the nucleotide exchange factor for DnaK and may function as a thermosensor. Unfolded proteins bind initially to DnaJ; upon interaction with the DnaJ-bound protein, DnaK hydrolyzes its bound ATP, resulting in the formation of a stable complex. GrpE releases ADP from DnaK; ATP binding to DnaK triggers the release of the substrate protein, thus completing the reaction cycle. Several rounds of ATP-dependent interactions between DnaJ, DnaK and GrpE are required for fully efficient folding. The chain is Protein GrpE from Clostridium perfringens (strain ATCC 13124 / DSM 756 / JCM 1290 / NCIMB 6125 / NCTC 8237 / Type A).